The following is a 250-amino-acid chain: MSNRTPPEQLTDRLFATERNPEDFRFDASVARVFPDMIRRSVPGYTTIIPMIEVITEQYVQPGSHCYDLGCSLGASTLAMRHGIPYPDCTLVGVDNSEAMIERCEHYVALDDHDLPVTLRCEDILSTELSNASVTTLNFTLQFVPPEQRLALLTRIGDATLPGGVLVLSEKIRFESDAEQAIQTRLHHEFKRANGYSDLEISQKRAAIEKVLIPETLADHRDRLQRAGFDQVLVWYQCFNFVSMLAIKNS.

S-adenosyl-L-methionine is bound by residues Tyr45, 70 to 72 (GCS), 95 to 96 (DN), 123 to 124 (DI), Asn138, and Arg205.

This sequence belongs to the class I-like SAM-binding methyltransferase superfamily. Cx-SAM synthase family. In terms of assembly, homodimer.

It catalyses the reaction prephenate + S-adenosyl-L-methionine = carboxy-S-adenosyl-L-methionine + 3-phenylpyruvate + H2O. Its function is as follows. Catalyzes the conversion of S-adenosyl-L-methionine (SAM) to carboxy-S-adenosyl-L-methionine (Cx-SAM). The protein is Carboxy-S-adenosyl-L-methionine synthase of Marinobacter nauticus (strain ATCC 700491 / DSM 11845 / VT8) (Marinobacter aquaeolei).